A 281-amino-acid chain; its full sequence is Cytochrome c oxidase subunit 3 (281 aa).

At 1–15 (MTHQTHAYHMVNPSP) the chain is on the mitochondrial matrix side. A helical transmembrane segment spans residues 16–34 (WPLTGALSALLLTSGLIMW). The Mitochondrial intermembrane segment spans residues 35 to 40 (FHYNSS). The chain crosses the membrane as a helical span at residues 41–66 (TLMFMGLTTMLLTMYQWWRDIIREGT). At 67–72 (FQGHHT) the chain is on the mitochondrial matrix side. Residues 73-105 (PVVQKGLRYGMILFILSEVFFFIGFFWAFYHSS) traverse the membrane as a helical segment. Topologically, residues 106-128 (LAPTPELGGCWPPTGIHPLNPLE) are mitochondrial intermembrane. Residues 129 to 152 (VPLLNTSILLASGVSITWAHHSLM) form a helical membrane-spanning segment. Residues 153–155 (EGN) lie on the Mitochondrial matrix side of the membrane. Residues 156-183 (RKQMIQALLITISLGLYFTILQAMEYYE) form a helical membrane-spanning segment. At 184 to 190 (ASFTISD) the chain is on the mitochondrial intermembrane side. A helical transmembrane segment spans residues 191–223 (GVYGSTFFVATGFHGLHVIIGSTFLIVCLLRQL). Residues 224–232 (FYHFTSTHH) are Mitochondrial matrix-facing. Residues 233–256 (FGFEAAAWYWHFVDVVWLFLYVSI) form a helical membrane-spanning segment. At 257–281 (YWWGSYFSSMISTTDFQSLSSGSNQ) the chain is on the mitochondrial intermembrane side.

The protein belongs to the cytochrome c oxidase subunit 3 family. In terms of assembly, component of the cytochrome c oxidase (complex IV, CIV), a multisubunit enzyme composed of 14 subunits. The complex is composed of a catalytic core of 3 subunits MT-CO1, MT-CO2 and MT-CO3, encoded in the mitochondrial DNA, and 11 supernumerary subunits COX4I, COX5A, COX5B, COX6A, COX6B, COX6C, COX7A, COX7B, COX7C, COX8 and NDUFA4, which are encoded in the nuclear genome. The complex exists as a monomer or a dimer and forms supercomplexes (SCs) in the inner mitochondrial membrane with NADH-ubiquinone oxidoreductase (complex I, CI) and ubiquinol-cytochrome c oxidoreductase (cytochrome b-c1 complex, complex III, CIII), resulting in different assemblies (supercomplex SCI(1)III(2)IV(1) and megacomplex MCI(2)III(2)IV(2)).

It is found in the mitochondrion inner membrane. The catalysed reaction is 4 Fe(II)-[cytochrome c] + O2 + 8 H(+)(in) = 4 Fe(III)-[cytochrome c] + 2 H2O + 4 H(+)(out). Its function is as follows. Component of the cytochrome c oxidase, the last enzyme in the mitochondrial electron transport chain which drives oxidative phosphorylation. The respiratory chain contains 3 multisubunit complexes succinate dehydrogenase (complex II, CII), ubiquinol-cytochrome c oxidoreductase (cytochrome b-c1 complex, complex III, CIII) and cytochrome c oxidase (complex IV, CIV), that cooperate to transfer electrons derived from NADH and succinate to molecular oxygen, creating an electrochemical gradient over the inner membrane that drives transmembrane transport and the ATP synthase. Cytochrome c oxidase is the component of the respiratory chain that catalyzes the reduction of oxygen to water. Electrons originating from reduced cytochrome c in the intermembrane space (IMS) are transferred via the dinuclear copper A center (CU(A)) of subunit 2 and heme A of subunit 1 to the active site in subunit 1, a binuclear center (BNC) formed by heme A3 and copper B (CU(B)). The BNC reduces molecular oxygen to 2 water molecules using 4 electrons from cytochrome c in the IMS and 4 protons from the mitochondrial matrix. The polypeptide is Cytochrome c oxidase subunit 3 (MT-CO3) (Didelphis virginiana (North American opossum)).